The chain runs to 323 residues: Probable pectate lyase A (323 aa).

A signal peptide spans 1-20; the sequence is MTNFKWIVAAAGLLSGQVLA. N-linked (GlcNAc...) asparagine glycosylation is present at asparagine 95. Residues aspartate 136, aspartate 165, and aspartate 169 each contribute to the Ca(2+) site. Residue arginine 222 is part of the active site.

Belongs to the polysaccharide lyase 1 family. Ca(2+) is required as a cofactor.

Its subcellular location is the secreted. It catalyses the reaction Eliminative cleavage of (1-&gt;4)-alpha-D-galacturonan to give oligosaccharides with 4-deoxy-alpha-D-galact-4-enuronosyl groups at their non-reducing ends.. Functionally, pectinolytic enzyme consist of four classes of enzymes: pectin lyase, polygalacturonase, pectin methylesterase and rhamnogalacturonase. Among pectinolytic enzymes, pectin lyase is the most important in depolymerization of pectin, since it cleaves internal glycosidic bonds of highly methylated pectins. Favors pectate, the anion, over pectin, the methyl ester. The protein is Probable pectate lyase A (plyA) of Aspergillus niger (strain ATCC MYA-4892 / CBS 513.88 / FGSC A1513).